An 84-amino-acid polypeptide reads, in one-letter code: Small ribosomal subunit protein uS17 (84 aa).

Belongs to the universal ribosomal protein uS17 family. Part of the 30S ribosomal subunit.

Its function is as follows. One of the primary rRNA binding proteins, it binds specifically to the 5'-end of 16S ribosomal RNA. In Shigella boydii serotype 18 (strain CDC 3083-94 / BS512), this protein is Small ribosomal subunit protein uS17.